A 311-amino-acid polypeptide reads, in one-letter code: Probable dihydroorotate dehydrogenase A (fumarate) (311 aa).

Residues Lys45, 69-73 (NSMGL), and Asn128 contribute to the substrate site. Position 45 to 46 (45 to 46 (KT)) interacts with FMN. Position 128 (Asn128) interacts with FMN. Cys131 functions as the Nucleophile in the catalytic mechanism. Positions 165 and 193 each coordinate FMN. Substrate is bound at residue 194–195 (NS). FMN is bound by residues Gly220, 248-249 (GG), and 270-271 (GT).

Belongs to the dihydroorotate dehydrogenase family. Type 1 subfamily. Homodimer. FMN is required as a cofactor.

Its subcellular location is the cytoplasm. The enzyme catalyses (S)-dihydroorotate + fumarate = orotate + succinate. It participates in pyrimidine metabolism; UMP biosynthesis via de novo pathway. In terms of biological role, catalyzes the conversion of dihydroorotate to orotate with fumarate as the electron acceptor. This Streptococcus pneumoniae serotype 4 (strain ATCC BAA-334 / TIGR4) protein is Probable dihydroorotate dehydrogenase A (fumarate) (pyrDA).